A 204-amino-acid polypeptide reads, in one-letter code: CLAVATA3/ESR (CLE)-related protein 1 (204 aa).

The signal sequence occupies residues 1–21 (MAKNAMLCLLILSVVLALAFA). The interval 21-83 (ATNEKDDKEA…SNQLQNAYRM (63 aa)) is required for secretion from the host cytoplasm to the host apoplasm. N-linked (GlcNAc...) asparagine glycosylation is present at Asn-32. The disordered stretch occupies residues 116–204 (RNTGMKPQSY…TPGVPDRQHR (89 aa)). Composition is skewed to basic and acidic residues over residues 139–151 (LHNR…EQKR), 160–172 (LHNR…EQKR), and 181–193 (LHNR…EQKR). 3 consecutive propeptides (removed in mature form) follow at residues 142–150 (REKILEEQK), 163–171 (REKTLEEQK), and 184–192 (REKTLEEQK).

The protein belongs to the CLV3/ESR signal peptide family. Post-translationally, preprocessing of the precursor by host proteases leads first to the production of 21-mer CLE-containing peptides (Arg-130 to Lys-150, Arg-151 to Lys-171 and Arg-172 to Lys-192) followed by an ultimate C-term trimming to give the mature 12-mer CLE1-1 peptide. Highly expressed exclusively within the dorsal esophageal gland cell during syncytium formation in host plants.

The protein localises to the secreted. It is found in the host cytoplasm. Its subcellular location is the host extracellular space. The protein resides in the extracellular space. It localises to the apoplast. Functionally, mimics host plant CLE extracellular signal peptides that regulate cell fate. May play a role in the differentiation or division of feeding cells (syncytia) induced in plant roots during infection. In Globodera rostochiensis (Golden nematode worm), this protein is CLAVATA3/ESR (CLE)-related protein 1.